Consider the following 503-residue polypeptide: Annexin A11 (503 aa).

Pro residues-rich tracts occupy residues 1-17 (MSYP…PPAP), 80-145 (GYPP…PYPG), and 155-169 (SPVP…PSYP). Disordered stretches follow at residues 1 to 35 (MSYP…MPPI) and 56 to 178 (AANM…GTVT). Annexin repeat units lie at residues 198–269 (FDPL…ALMK), 270–341 (TPIL…SLSQ), 353–425 (SLVQ…AVVK), and 429–500 (NTPA…KICG). Residues lysine 246 and lysine 253 each carry the N6-acetyllysine modification. Lysine 477 bears the N6-acetyllysine mark.

This sequence belongs to the annexin family. In terms of assembly, interacts with PDCD6 in a calcium-dependent manner. Interacts with KIF23 during cytokinesis. Interacts with S100A6.

It localises to the cytoplasm. The protein resides in the melanosome. It is found in the nucleus envelope. Its subcellular location is the nucleus. The protein localises to the nucleoplasm. It localises to the cytoskeleton. The protein resides in the spindle. Functionally, required for midbody formation and completion of the terminal phase of cytokinesis. Binds specifically to calcyclin in a calcium-dependent manner. This is Annexin A11 (ANXA11) from Oryctolagus cuniculus (Rabbit).